We begin with the raw amino-acid sequence, 482 residues long: Type II methyltransferase M.AvaI (482 aa).

This sequence belongs to the N(4)/N(6)-methyltransferase family. N(4) subfamily.

The enzyme catalyses a 2'-deoxycytidine in DNA + S-adenosyl-L-methionine = an N(4)-methyl-2'-deoxycytidine in DNA + S-adenosyl-L-homocysteine + H(+). Functionally, an alpha subtype methylase that recognizes the double-stranded sequence 5'-CYCGRG-3', methylates C-1 on both strands, and protects the DNA from cleavage by the AvaI endonuclease. This Anabaena variabilis protein is Type II methyltransferase M.AvaI.